Reading from the N-terminus, the 224-residue chain is Putative O-methyltransferase MLBr01075 (224 aa).

S-adenosyl-L-methionine contacts are provided by residues valine 51, glutamate 73, 75-76, serine 81, aspartate 99, and isoleucine 100; that span reads GT. Position 147 (aspartate 147) interacts with substrate. An S-adenosyl-L-methionine-binding site is contributed by aspartate 149.

It belongs to the class I-like SAM-binding methyltransferase superfamily. Cation-dependent O-methyltransferase family.

In Mycobacterium leprae (strain Br4923), this protein is Putative O-methyltransferase MLBr01075.